Here is a 116-residue protein sequence, read N- to C-terminus: Flagellar transcriptional regulator FlhD (116 aa).

It belongs to the FlhD family. In terms of assembly, homodimer; disulfide-linked. Forms a heterohexamer composed of two FlhC and four FlhD subunits. Each FlhC binds a FlhD dimer, forming a heterotrimer, and a hexamer assembles by dimerization of two heterotrimers.

The protein resides in the cytoplasm. Functions in complex with FlhC as a master transcriptional regulator that regulates transcription of several flagellar and non-flagellar operons by binding to their promoter region. Activates expression of class 2 flagellar genes, including fliA, which is a flagellum-specific sigma factor that turns on the class 3 genes. Also regulates genes whose products function in a variety of physiological pathways. This Serratia proteamaculans (strain 568) protein is Flagellar transcriptional regulator FlhD.